A 563-amino-acid chain; its full sequence is Grainyhead-like protein 1 homolog (563 aa).

Residues 194-428 form the Grh/CP2 DB domain; sequence NNLGFQYVLE…ELDKPAALFI (235 aa). 2 interaction with DNA regions span residues 326 to 335 and 372 to 375; these read TDFSTQKGVK and RKLR. Residues 377–405 are disordered; sequence EDKRAQKRKVQEYTAGALPGGRKKSDGEY.

This sequence belongs to the grh/CP2 family. Grainyhead subfamily.

Its subcellular location is the nucleus. Functionally, probable transcription factor. Binds a motif with the core sequence 5'-C[ACT][TG]G-3' in regulatory elements of target genes. Many putative target genes show oscillating expression levels, perhaps as a result of rhythmic variation in accumulation of grh-1. Plays a role in proper cuticle formation and/or barrier function and is required repetitively during development, for successful completion of each molt. Involved in modulating lifespan. Plays a role in defense response to bacteria. May act upstream of the p38 MAP kinase / pmk-1 pathway. May act downstream of the insulin/IGF-1 receptor signaling (IIS) pathway. The protein is Grainyhead-like protein 1 homolog of Caenorhabditis elegans.